The chain runs to 815 residues: Lon protease 1 (815 aa).

The region spanning 19-212 (MPLLPLRDIV…KLFGQIRSEI (194 aa)) is the Lon N-terminal domain. 364–371 (GPPGVGKT) provides a ligand contact to ATP. The 182-residue stretch at 601-782 (KDEIGLAVGL…DDVLRKAMVV (182 aa)) folds into the Lon proteolytic domain. Residues S688 and K731 contribute to the active site. The interval 793-815 (EAGAQQAVMFEQKPPAADEIRAH) is disordered.

Belongs to the peptidase S16 family. As to quaternary structure, homohexamer. Organized in a ring with a central cavity.

The protein localises to the cytoplasm. The catalysed reaction is Hydrolysis of proteins in presence of ATP.. Functionally, ATP-dependent serine protease that mediates the selective degradation of mutant and abnormal proteins as well as certain short-lived regulatory proteins. Required for cellular homeostasis and for survival from DNA damage and developmental changes induced by stress. Degrades polypeptides processively to yield small peptide fragments that are 5 to 10 amino acids long. Binds to DNA in a double-stranded, site-specific manner. In Syntrophobacter fumaroxidans (strain DSM 10017 / MPOB), this protein is Lon protease 1.